The sequence spans 1634 residues: Protein TIC 214 (1634 aa).

The next 5 helical transmembrane spans lie at 25–45 (FIIGQFIRFISIYYAPLYVAL), 53–73 (ILALPYLLIHLFWNTDKSFFA), 94–116 (HFILQLLNSCILPNSTLARLITI), 133–153 (FAWFIGQIFMLNSFELVLVWI), and 172–192 (IFVILFNCLFGSLLFILSIQC). Disordered regions lie at residues 216-242 (RERLQSEEERDVEKKKPDYKLPDSESE) and 1365-1395 (QQKSETDSETDSQQKNIAETQKYLEEDSTKS). The span at 1386–1395 (KYLEEDSTKS) shows a compositional bias: basic and acidic residues.

Belongs to the TIC214 family. In terms of assembly, part of the Tic complex.

The protein resides in the plastid. Its subcellular location is the chloroplast inner membrane. Functionally, involved in protein precursor import into chloroplasts. May be part of an intermediate translocation complex acting as a protein-conducting channel at the inner envelope. The polypeptide is Protein TIC 214 (Cuscuta exaltata (Tall dodder)).